Here is a 423-residue protein sequence, read N- to C-terminus: Carboxypeptidase B2 (423 aa).

An N-terminal signal peptide occupies residues 1 to 22 (MKLYSLGVLVATVLFCGEHAFA). The propeptide at 23-114 (FQRGQVLSAL…QTSNDTISPR (92 aa)) is activation peptide. N-linked (GlcNAc...) asparagine glycosylation is found at Asn-44, Asn-73, Asn-85, and Asn-108. Positions 122 to 419 (QYHSLNEIYS…VAVAKIASHV (298 aa)) constitute a Peptidase M14 domain. An intrachain disulfide couples Cys-178 to Cys-191. Zn(2+) is bound by residues His-181 and Glu-184. Substrate is bound by residues 181–184 (HARE) and Arg-239. Asn-241 is a glycosylation site (N-linked (GlcNAc...) asparagine). 2 disulfide bridges follow: Cys-250–Cys-274 and Cys-265–Cys-279. Residue 256–257 (NR) participates in substrate binding. His-310 lines the Zn(2+) pocket. Substrate contacts are provided by residues 311–312 (SY) and Tyr-363. Glu-385 functions as the Proton donor/acceptor in the catalytic mechanism.

Belongs to the peptidase M14 family. Zn(2+) is required as a cofactor.

Its subcellular location is the secreted. It carries out the reaction Release of C-terminal Arg and Lys from a polypeptide.. TAFI/CPB2 is unique among carboxypeptidases in that it spontaneously inactivates with a short half-life, a property that is crucial for its role in controlling blood clot lysis. The zymogen is stabilized by interactions with the activation peptide. Release of the activation peptide increases a dynamic flap mobility and in time this leads to conformational changes that disrupt the catalytic site and expose a cryptic thrombin-cleavage site present at Arg-324. Its function is as follows. Cleaves C-terminal arginine or lysine residues from biologically active peptides such as kinins or anaphylatoxins in the circulation thereby regulating their activities. Down-regulates fibrinolysis by removing C-terminal lysine residues from fibrin that has already been partially degraded by plasmin. This chain is Carboxypeptidase B2 (CPB2), found in Bos taurus (Bovine).